The following is a 338-amino-acid chain: Anthocyanidin reductase ((2S)-flavan-3-ol-forming) (338 aa).

NADP(+)-binding positions include 18 to 21 (TGFV), Lys-48, 87 to 90 (VATP), and Tyr-168.

It belongs to the NAD(P)-dependent epimerase/dehydratase family. Dihydroflavonol-4-reductase subfamily.

It carries out the reaction a (2S,3R)-flavan-3-ol + 2 NADP(+) = an anthocyanidin with a 3-hydroxy group + 2 NADPH + 2 H(+). The enzyme catalyses a (2S,3S)-flavan-3-ol + 2 NADP(+) = an anthocyanidin with a 3-hydroxy group + 2 NADPH + 2 H(+). The protein operates within secondary metabolite biosynthesis; flavonoid biosynthesis. Its function is as follows. Produces the terminal flavan-3-ol monomers required for the formation of proanthocyanidins or condensed tannins in leaves and flowers, as well as in the skin and seeds of developing berries. Behaves as a reductase and as a C-3 epimerase. Catalyzes the double reduction of anthocyanidins, producing a mixture of (2S,3S)- and (2S,3R)-flavan-3-ols. The enzyme catalyzes sequential hydride transfers to C-2 and C-4, respectively and epimerization at C-3 is achieved by tautomerization that occurs between the two hydride transfers. Converts cyanidin, pelargonidin and delphinidin into catechin and epicatechin, afzelechin and epiafzelechin, and gallocatechin and epigallocatechin respectively. This is Anthocyanidin reductase ((2S)-flavan-3-ol-forming) from Vitis vinifera (Grape).